The chain runs to 491 residues: Ketol-acid reductoisomerase (NADP(+)) (491 aa).

The KARI N-terminal Rossmann domain maps to 15–208 (AQLGKCRFMG…GGHRAGVLES (194 aa)). NADP(+)-binding positions include 45–48 (CGAQ), Arg-68, Arg-76, Ser-78, and 108–110 (DKQ). The active site involves His-132. Gly-158 lines the NADP(+) pocket. KARI C-terminal knotted domains are found at residues 209-344 (SFVA…TAPQ) and 345-484 (FEGK…MTDM). 4 residues coordinate Mg(2+): Asp-217, Glu-221, Glu-389, and Glu-393. Position 414 (Ser-414) interacts with substrate.

The protein belongs to the ketol-acid reductoisomerase family. Mg(2+) is required as a cofactor.

The enzyme catalyses (2R)-2,3-dihydroxy-3-methylbutanoate + NADP(+) = (2S)-2-acetolactate + NADPH + H(+). It carries out the reaction (2R,3R)-2,3-dihydroxy-3-methylpentanoate + NADP(+) = (S)-2-ethyl-2-hydroxy-3-oxobutanoate + NADPH + H(+). Its pathway is amino-acid biosynthesis; L-isoleucine biosynthesis; L-isoleucine from 2-oxobutanoate: step 2/4. It participates in amino-acid biosynthesis; L-valine biosynthesis; L-valine from pyruvate: step 2/4. Functionally, involved in the biosynthesis of branched-chain amino acids (BCAA). Catalyzes an alkyl-migration followed by a ketol-acid reduction of (S)-2-acetolactate (S2AL) to yield (R)-2,3-dihydroxy-isovalerate. In the isomerase reaction, S2AL is rearranged via a Mg-dependent methyl migration to produce 3-hydroxy-3-methyl-2-ketobutyrate (HMKB). In the reductase reaction, this 2-ketoacid undergoes a metal-dependent reduction by NADPH to yield (R)-2,3-dihydroxy-isovalerate. In Salmonella dublin (strain CT_02021853), this protein is Ketol-acid reductoisomerase (NADP(+)).